Consider the following 426-residue polypeptide: Glutamate-1-semialdehyde 2,1-aminomutase (426 aa).

Lys-265 is modified (N6-(pyridoxal phosphate)lysine).

This sequence belongs to the class-III pyridoxal-phosphate-dependent aminotransferase family. HemL subfamily. Homodimer. Requires pyridoxal 5'-phosphate as cofactor.

The protein localises to the cytoplasm. The enzyme catalyses (S)-4-amino-5-oxopentanoate = 5-aminolevulinate. It participates in porphyrin-containing compound metabolism; protoporphyrin-IX biosynthesis; 5-aminolevulinate from L-glutamyl-tRNA(Glu): step 2/2. The protein is Glutamate-1-semialdehyde 2,1-aminomutase of Klebsiella pneumoniae subsp. pneumoniae (strain ATCC 700721 / MGH 78578).